The primary structure comprises 502 residues: ATP synthase subunit alpha 1/3 (502 aa).

169–176 serves as a coordination point for ATP; sequence GDRQTGKT.

This sequence belongs to the ATPase alpha/beta chains family. As to quaternary structure, F-type ATPases have 2 components, CF(1) - the catalytic core - and CF(0) - the membrane proton channel. CF(1) has five subunits: alpha(3), beta(3), gamma(1), delta(1), epsilon(1). CF(0) has three main subunits: a(1), b(2) and c(9-12). The alpha and beta chains form an alternating ring which encloses part of the gamma chain. CF(1) is attached to CF(0) by a central stalk formed by the gamma and epsilon chains, while a peripheral stalk is formed by the delta and b chains.

It localises to the cell inner membrane. The catalysed reaction is ATP + H2O + 4 H(+)(in) = ADP + phosphate + 5 H(+)(out). Produces ATP from ADP in the presence of a proton gradient across the membrane. The alpha chain is a regulatory subunit. The protein is ATP synthase subunit alpha 1/3 of Syntrophotalea carbinolica (strain DSM 2380 / NBRC 103641 / GraBd1) (Pelobacter carbinolicus).